The following is an 829-amino-acid chain: Leucine--tRNA ligase (829 aa).

The 'HIGH' region motif lies at 40–50; the sequence is PYPSGNIHMGH. The 'KMSKS' region signature appears at 581-585; it reads KMSKS. K584 is a binding site for ATP.

The protein belongs to the class-I aminoacyl-tRNA synthetase family.

The protein localises to the cytoplasm. The enzyme catalyses tRNA(Leu) + L-leucine + ATP = L-leucyl-tRNA(Leu) + AMP + diphosphate. This Nitratidesulfovibrio vulgaris (strain DP4) (Desulfovibrio vulgaris) protein is Leucine--tRNA ligase.